A 530-amino-acid polypeptide reads, in one-letter code: 6-phosphofructo-2-kinase/fructose-2,6-bisphosphatase 2 (530 aa).

The segment covering 1–15 (MSGASSSEQNNNSYE) has biased composition (polar residues). Positions 1 to 21 (MSGASSSEQNNNSYETKPPNL) are disordered. Residue serine 2 is modified to N-acetylserine. Residues 2-248 (SGASSSEQNN…VYYLMNIHVQ (247 aa)) form a 6-phosphofructo-2-kinase region. At serine 29 the chain carries Phosphoserine; by PKA. ATP is bound at residue 45–53 (GLPARGKTY). Positions 78 and 102 each coordinate beta-D-fructose 6-phosphate. Aspartate 128 is a catalytic residue. Beta-D-fructose 6-phosphate contacts are provided by threonine 130 and arginine 136. Residue cysteine 158 is part of the active site. 167–172 (NILEVK) is an ATP binding site. Beta-D-fructose 6-phosphate is bound by residues lysine 172, arginine 193, and tyrosine 197. The fructose-2,6-bisphosphatase stretch occupies residues 249–530 (PRTIYLCRHG…PPALASCPCH (282 aa)). Residue arginine 256 participates in beta-D-fructose 2,6-bisphosphate binding. Catalysis depends on histidine 257, which acts as the Tele-phosphohistidine intermediate. Glycine 269 is a binding site for beta-D-fructose 2,6-bisphosphate. Glutamate 326 serves as the catalytic Proton donor/acceptor. Tyrosine 337, arginine 351, lysine 355, tyrosine 366, glutamine 392, and arginine 396 together coordinate beta-D-fructose 2,6-bisphosphate. 348–351 (FALR) lines the ATP pocket. Residues 392 to 396 (QAVMR) and tyrosine 428 contribute to the ATP site. The interval 446 to 512 (RDKPTNNFPK…GPTSRRPKSH (67 aa)) is disordered. A compositionally biased stretch (polar residues) spans 450–476 (TNNFPKNQTPVRMRRNSFTPLSSSNTI). A Phosphoserine; by AMPK and PKA modification is found at serine 466. Position 468 is a phosphothreonine (threonine 468). The residue at position 475 (threonine 475) is a Phosphothreonine; by PKC. A phosphoserine mark is found at serine 483 and serine 493.

It in the C-terminal section; belongs to the phosphoglycerate mutase family. In terms of assembly, homodimer. Forms a heterodimer with PFKFB3. Post-translationally, phosphorylation by AMPK stimulates activity.

It catalyses the reaction beta-D-fructose 2,6-bisphosphate + H2O = beta-D-fructose 6-phosphate + phosphate. It carries out the reaction beta-D-fructose 6-phosphate + ATP = beta-D-fructose 2,6-bisphosphate + ADP + H(+). Phosphorylation results in the activation of the kinase activity. In terms of biological role, synthesis and degradation of fructose 2,6-bisphosphate. The protein is 6-phosphofructo-2-kinase/fructose-2,6-bisphosphatase 2 (PFKFB2) of Pongo abelii (Sumatran orangutan).